A 525-amino-acid chain; its full sequence is Glutamate--cysteine ligase (525 aa).

Belongs to the glutamate--cysteine ligase type 1 family. Type 1 subfamily.

The catalysed reaction is L-cysteine + L-glutamate + ATP = gamma-L-glutamyl-L-cysteine + ADP + phosphate + H(+). Its pathway is sulfur metabolism; glutathione biosynthesis; glutathione from L-cysteine and L-glutamate: step 1/2. This Pseudomonas putida (strain W619) protein is Glutamate--cysteine ligase.